We begin with the raw amino-acid sequence, 357 residues long: Glucose 1-dehydrogenase (357 aa).

Asp-38 lines the Zn(2+) pocket. Residues Thr-40 and His-49 each coordinate substrate. The Zn(2+) site is built by His-63 and Glu-64. Positions 114 and 150 each coordinate substrate. Glu-150 serves as a coordination point for Zn(2+). NADP(+)-binding positions include Asn-181–Leu-184, Arg-207–Arg-208, Ser-228, Leu-272–Val-274, and Ser-301–Asn-303. Residue Asn-303 participates in substrate binding.

It belongs to the zinc-containing alcohol dehydrogenase family. Glucose 1-dehydrogenase subfamily. In terms of assembly, homodimer. Zn(2+) is required as a cofactor.

It catalyses the reaction D-glucose + NAD(+) = D-glucono-1,5-lactone + NADH + H(+). It carries out the reaction D-glucose + NADP(+) = D-glucono-1,5-lactone + NADPH + H(+). Activated by molar concentrations of KCl or NaCl. Inhibited by EDTA in vitro. Its function is as follows. Catalyzes the NAD(P)(+)-dependent oxidation of D-glucose to D-gluconate. Displays broad substrate specificity since it is able to catalyze the oxidation of a number of alternative aldose sugars, such as D-xylose, D-galactose, and D-fucose, to the corresponding glyconate. Can utilize both NAD(+) and NADP(+) as electron acceptor, with a preference for NADP(+). Physiologically, seems to be involved in the degradation of glucose through a modified Entner-Doudoroff pathway. The polypeptide is Glucose 1-dehydrogenase (Haloferax mediterranei (strain ATCC 33500 / DSM 1411 / JCM 8866 / NBRC 14739 / NCIMB 2177 / R-4) (Halobacterium mediterranei)).